The chain runs to 226 residues: Clarin-3 (226 aa).

A helical membrane pass occupies residues 8–28 (LMFLSGFLTSLGSVVVICSIL). 2 N-linked (GlcNAc...) asparagine glycosylation sites follow: Asn-46 and Asn-83. 3 helical membrane passes run 92–112 (VVII…MFTF), 128–148 (GVYT…VLFV), and 181–201 (FWLI…IIFY).

This sequence belongs to the clarin family.

The protein localises to the membrane. The protein is Clarin-3 (Clrn3) of Rattus norvegicus (Rat).